Consider the following 391-residue polypeptide: Chaperone protein DnaJ (391 aa).

A J domain is found at aspartate 2 to glycine 67. The CR-type zinc-finger motif lies at glycine 148–lysine 226. 8 residues coordinate Zn(2+): cysteine 161, cysteine 164, cysteine 178, cysteine 181, cysteine 200, cysteine 203, cysteine 214, and cysteine 217. CXXCXGXG motif repeat units follow at residues cysteine 161 to glycine 168, cysteine 178 to glycine 185, cysteine 200 to glycine 207, and cysteine 214 to glycine 221.

It belongs to the DnaJ family. As to quaternary structure, homodimer. Zn(2+) is required as a cofactor.

It localises to the cytoplasm. Functionally, participates actively in the response to hyperosmotic and heat shock by preventing the aggregation of stress-denatured proteins and by disaggregating proteins, also in an autonomous, DnaK-independent fashion. Unfolded proteins bind initially to DnaJ; upon interaction with the DnaJ-bound protein, DnaK hydrolyzes its bound ATP, resulting in the formation of a stable complex. GrpE releases ADP from DnaK; ATP binding to DnaK triggers the release of the substrate protein, thus completing the reaction cycle. Several rounds of ATP-dependent interactions between DnaJ, DnaK and GrpE are required for fully efficient folding. Also involved, together with DnaK and GrpE, in the DNA replication of plasmids through activation of initiation proteins. This Chlamydia felis (strain Fe/C-56) (Chlamydophila felis) protein is Chaperone protein DnaJ.